The following is a 409-amino-acid chain: Elongation factor Tu (409 aa).

Residues 10 to 214 form the tr-type G domain; it reads KPHVNIGTIG…AVDSYIPTPE (205 aa). The segment at 19–26 is G1; the sequence is GHVDHGKT. Residue 19-26 participates in GTP binding; it reads GHVDHGKT. Residue Thr26 participates in Mg(2+) binding. The G2 stretch occupies residues 60-64; it reads GITIN. Residues 81–84 form a G3 region; the sequence is DCPG. Residues 81 to 85 and 136 to 139 contribute to the GTP site; these read DCPGH and NKVD. Residues 136–139 are G4; that stretch reads NKVD. Residues 174–176 are G5; sequence SGL.

It belongs to the TRAFAC class translation factor GTPase superfamily. Classic translation factor GTPase family. EF-Tu/EF-1A subfamily. As to quaternary structure, monomer.

The protein resides in the cytoplasm. It carries out the reaction GTP + H2O = GDP + phosphate + H(+). In terms of biological role, GTP hydrolase that promotes the GTP-dependent binding of aminoacyl-tRNA to the A-site of ribosomes during protein biosynthesis. The protein is Elongation factor Tu of Cyanothece sp. (strain PCC 7425 / ATCC 29141).